Reading from the N-terminus, the 85-residue chain is Dual endothelin-1/VEGF signal peptide receptor (85 aa).

Topologically, residues Met1–Ser18 are extracellular. Residues Ile19–Ser37 traverse the membrane as a helical segment. At Lys38–Val85 the chain is on the cytoplasmic side.

N-glycosylated. Expressed in kidney. Expressed in endothelial cells.

The protein localises to the cell membrane. Dual receptor for both endothelin-1 and the signal sequence of vascular endothelial growth factor A. Does not act as a receptor for angiotensin-2. Does not bind the VEGFA mature protein. May play a role in angiogenesis with a significant role in cardiovascular and neural development. This chain is Dual endothelin-1/VEGF signal peptide receptor, found in Homo sapiens (Human).